Here is a 208-residue protein sequence, read N- to C-terminus: Probable GTP-binding protein EngB (208 aa).

In terms of domain architecture, EngB-type G spans 23 to 205 (LTSEMVILGR…RQTLLKYLLT (183 aa)). GTP-binding positions include 31 to 38 (GRSNVGKS), 57 to 61 (GKTRL), 84 to 87 (DLPG), 154 to 157 (TKFD), and 182 to 184 (FNA). Ser-38 and Thr-59 together coordinate Mg(2+).

This sequence belongs to the TRAFAC class TrmE-Era-EngA-EngB-Septin-like GTPase superfamily. EngB GTPase family. Requires Mg(2+) as cofactor.

Necessary for normal cell division and for the maintenance of normal septation. This chain is Probable GTP-binding protein EngB, found in Helicobacter pylori (strain P12).